The chain runs to 505 residues: uncharacterized protein (505 aa).

Over residues 1-16 (MPPTASLTRSPPTASQ) the composition is skewed to polar residues. Residues 1 to 474 (MPPTASLTRS…TPPTASLTRT (474 aa)) form a disordered region. Composition is skewed to low complexity over residues 17 to 33 (TRTL…PRAS) and 40 to 59 (TASL…PPRA). Over residues 66-78 (SRASLTRTLSRAS) the composition is skewed to polar residues. 3 stretches are compositionally biased toward low complexity: residues 96-122 (SLTR…PPRT), 129-140 (PRTSQTRTPPRA), and 147-158 (SRASRTRTPPRA). Polar residues-rich tracts occupy residues 165–177 (SRAS…SRAS) and 188–200 (TRTP…TRTP). Low complexity predominate over residues 201 to 226 (PTASLTRASRTRTPPRTSQTRTPPRA). 7 stretches are compositionally biased toward polar residues: residues 233-254 (SRAS…SRAS), 265-293 (TRTP…SLTR), 309-329 (LTRT…SLTR), 345-365 (LTRT…SLTR), 373-383 (TRTPSRASLTR), 399-408 (LTRSPPTASL), and 435-448 (LTRS…TRTP). Over residues 453–474 (LRRTPPRTSLTRTPPTASLTRT) the composition is skewed to low complexity.

This is an uncharacterized protein from Homo sapiens (Human).